A 377-amino-acid chain; its full sequence is Guanine nucleotide-binding protein subunit alpha-13 (377 aa).

Residues C14 and C18 are each lipidated (S-palmitoyl cysteine). One can recognise a G-alpha domain in the interval 47–377; that stretch reads RLVKILLLGA…HDNLKQLMLQ (331 aa). Residues 50-63 form a G1 motif region; it reads KILLLGAGESGKST. GTP contacts are provided by residues 58-63, S173, and 197-200; these read ESGKST and LLAR. A Mg(2+)-binding site is contributed by S62. A G2 motif region spans residues 195–203; it reads DILLARRPT. T203 serves as a coordination point for Mg(2+). Phosphothreonine is present on T203. Residues 218–227 are G3 motif; the sequence is FKMVDVGGQR. The interval 287–294 is G4 motif; it reads ILFLNKTD. Residues 291-294 and A349 each bind GTP; that span reads NKTD. Positions 347–352 are G5 motif; sequence TTAINT.

The protein belongs to the G-alpha family. G(12) subfamily. As to quaternary structure, g proteins are composed of 3 units; alpha, beta and gamma. The alpha chain contains the guanine nucleotide binding site. Interacts with UBXD5. Interacts with HAX1. Interacts (in GTP-bound form) with PPP5C (via TPR repeats); activates PPP5C phosphatase activity and translocates PPP5C to the cell membrane. Interacts with RGS22. Interacts (in GTP-bound form) with ARHGEF1. Interacts (in GTP-bound form) with ARHGEF11 (via RGS domain). Interacts (in GTP-bound form) with ARHGEF12 (via RGS domain). Interacts with CTNND1. Interacts with GAS2L2. Interacts with GPR35. Interacts with GPR174. Post-translationally, phosphorylation on Thr-203 destabilizes the heterotrimer of alpha, beta and gamma, and inhibits Rho activation. As to expression, expressed in brain and testis, as well as in kidney and sperm (at protein level).

The protein resides in the membrane. It is found in the melanosome. Its subcellular location is the cytoplasm. It localises to the nucleus. Functionally, guanine nucleotide-binding proteins (G proteins) are involved as modulators or transducers in various transmembrane signaling systems. Activates effector molecule RhoA by binding and activating RhoGEFs (ARHGEF1/p115RhoGEF, ARHGEF11/PDZ-RhoGEF and ARHGEF12/LARG). GNA13-dependent Rho signaling subsequently regulates transcription factor AP-1 (activating protein-1). Promotes tumor cell invasion and metastasis by activating Rho/ROCK signaling pathway. Inhibits CDH1-mediated cell adhesion in a process independent from Rho activation. In lymphoid follicles, transmits P2RY8- and S1PR2-dependent signals that lead to inhibition of germinal center (GC) B cell growth and migration outside the GC niche. This is Guanine nucleotide-binding protein subunit alpha-13 (Gna13) from Mus musculus (Mouse).